The following is a 199-amino-acid chain: MAKVLVLYYSAYGHIEAMANAVADGARQAGATVDVKRVPELVPEAVAKAKYFKLDQAAPLAKVDDLADYDAIVVGTGTRFGRMSSQMASFLDQAGGLWARGALHGKVGGAFSSSATQHGGQETTLFSIITNLLHFGMTIVGLNYGFAGQMGVKEVTGGAPYGATTIADGDGSRPPSENELAGARYQGRMIAETAAKLHG.

The region spanning 4–190 is the Flavodoxin-like domain; sequence VLVLYYSAYG…AGARYQGRMI (187 aa). FMN is bound by residues 10–15 and 78–80; these read SAYGHI and TRF. Tyr12 is a binding site for NAD(+). Trp98 provides a ligand contact to substrate. FMN is bound by residues 113–119 and His134; that span reads SSATQHG.

It belongs to the WrbA family. FMN is required as a cofactor.

The enzyme catalyses a quinone + NADH + H(+) = a quinol + NAD(+). It carries out the reaction a quinone + NADPH + H(+) = a quinol + NADP(+). This is NAD(P)H dehydrogenase (quinone) from Nitrobacter winogradskyi (strain ATCC 25391 / DSM 10237 / CIP 104748 / NCIMB 11846 / Nb-255).